Reading from the N-terminus, the 489-residue chain is Ubiquitin carboxyl-terminal hydrolase 14 (489 aa).

The 357-residue stretch at 102–458 (CGLANLGNTC…SAYVLLYEAR (357 aa)) folds into the USP domain. The Nucleophile role is filled by cysteine 111. Histidine 409 acts as the Proton acceptor in catalysis. Residues 467-489 (PPAPVPTEVAADTAEPMEVSEKQ) form a disordered region.

The protein belongs to the peptidase C19 family. USP14/UBP6 subfamily.

The catalysed reaction is Thiol-dependent hydrolysis of ester, thioester, amide, peptide and isopeptide bonds formed by the C-terminal Gly of ubiquitin (a 76-residue protein attached to proteins as an intracellular targeting signal).. Its function is as follows. Proteasome-associated deubiquitinase which releases ubiquitin from the proteasome targeted ubiquitinated proteins. Ensures the regeneration of ubiquitin at the proteasome. The protein is Ubiquitin carboxyl-terminal hydrolase 14 (usp-14) of Caenorhabditis elegans.